The primary structure comprises 312 residues: MNEEVEDGEVKPLELSSEDKAILVETLKNKLQALAEQHVDVLESLAPSVRKRVDVLMEIQSQHDELEVKFFEEKAALEAKYQKLYGPLYSKRSKIVSGVLEVEGETEEREEKGVPDFWLNAMKNNEILAEEIHESDEEALKYLKDIKWCRIDDPKGFKFEFFFYTNPFFKNQVLTKTYHMIDEDDEPILEKAIGTEIEWHPGYCLTQEVLTKESSESTKPITKTEECESFFNFFSPPQVPDDDAKIDENTAEELQNQMERDYDIASTLRDKIIPHAVSWFTREAVQDEDYGASWVDDEEEDDNDDEYSDEEA.

Positions 24–78 form a coiled coil; the sequence is VETLKNKLQALAEQHVDVLESLAPSVRKRVDVLMEIQSQHDELEVKFFEEKAALE. A Nuclear export signal motif is present at residues 45–60; that stretch reads LAPSVRKRVDVLMEIQ. Positions 288–312 are disordered; that stretch reads EDYGASWVDDEEEDDNDDEYSDEEA.

The protein belongs to the nucleosome assembly protein (NAP) family.

It is found in the nucleus. Its subcellular location is the cytoplasm. Functionally, may modulate chromatin structure by regulation of nucleosome assembly/disassembly. The protein is Nucleosome assembly protein 1-like 4 of Oryza sativa subsp. indica (Rice).